The chain runs to 398 residues: MTQSVCILGVTGSIGQSTLKVLAQHPDKYSIYAITAHSRIQELVEICKQFKPKRVVVPDEHIDQLRQLLLQAGLADIDILSGTTGLVSVAQDEAVDVVMAAIVGAAGLLPTLAAVKAGKRVLLANKEALVMSGNIMMQAARDHQALLLPVDSEHNAIFQSLPSNYLTLENTGQPQLGVSRILLTASGGPFLDYPLEQLSEVTPQQACKHPNWSMGQKISVDSATLMNKGLELIEACHLFSISEHFVTVVVHPQSIIHSMVQYIDGSTLAQMGNPDMCTPIAHALAWPDRLQTHVPALDLFTHTHLDFREPDTNKFPALNLARQAMRAGGLSPCILNAANEIAVDAFLKLQIKFTVIPEVIEHVLNHVQNDTAVNIEQVLETDMIARQIAHQYVNQIRG.

5 residues coordinate NADPH: Thr11, Gly12, Ser13, Ile14, and Asn125. Lys126 contributes to the 1-deoxy-D-xylulose 5-phosphate binding site. Glu127 is a binding site for NADPH. Residue Asp151 participates in Mn(2+) binding. Positions 152, 153, 186, and 209 each coordinate 1-deoxy-D-xylulose 5-phosphate. A Mn(2+)-binding site is contributed by Glu153. Position 215 (Gly215) interacts with NADPH. The 1-deoxy-D-xylulose 5-phosphate site is built by Ser222, Asn227, Lys228, and Glu231. Glu231 is a binding site for Mn(2+).

This sequence belongs to the DXR family. Mg(2+) is required as a cofactor. Mn(2+) serves as cofactor.

The enzyme catalyses 2-C-methyl-D-erythritol 4-phosphate + NADP(+) = 1-deoxy-D-xylulose 5-phosphate + NADPH + H(+). Its pathway is isoprenoid biosynthesis; isopentenyl diphosphate biosynthesis via DXP pathway; isopentenyl diphosphate from 1-deoxy-D-xylulose 5-phosphate: step 1/6. Catalyzes the NADPH-dependent rearrangement and reduction of 1-deoxy-D-xylulose-5-phosphate (DXP) to 2-C-methyl-D-erythritol 4-phosphate (MEP). In Acinetobacter baylyi (strain ATCC 33305 / BD413 / ADP1), this protein is 1-deoxy-D-xylulose 5-phosphate reductoisomerase.